We begin with the raw amino-acid sequence, 492 residues long: NAD(P)H-quinone oxidoreductase subunit 2 A, chloroplastic (492 aa).

A run of 13 helical transmembrane segments spans residues 6–26, 39–59, 81–101, 106–126, 131–151, 165–185, 209–229, 277–297, 305–325, 336–356, 377–397, 400–420, and 464–484; these read LLLFDGSLIFPECILIFGLIL, ISWFYFISSTSLVMSITALLF, IFQFLILLCSTLCIPLSVEYI, MAITEFLLFILTTTLGGMFLC, LITIFVALECFSLCSYLLSGY, YLLMGGASSSILVHGFSWLYG, PGILIALLFITVGIGFKLSPA, WHLLLEILAILSMILGNLIAI, MLAYSSIGQIGYVIIGIIVGD, YMLFYISMNLGTFACIVSFGL, ALSLALCLLSLGGLPPLAGFF, LHLFWCGWQAGLYFLVSIGLL, and FSMIVCVIASTIPGISMNPII.

It belongs to the complex I subunit 2 family. As to quaternary structure, NDH is composed of at least 16 different subunits, 5 of which are encoded in the nucleus.

It localises to the plastid. The protein resides in the chloroplast thylakoid membrane. The catalysed reaction is a plastoquinone + NADH + (n+1) H(+)(in) = a plastoquinol + NAD(+) + n H(+)(out). It catalyses the reaction a plastoquinone + NADPH + (n+1) H(+)(in) = a plastoquinol + NADP(+) + n H(+)(out). In terms of biological role, NDH shuttles electrons from NAD(P)H:plastoquinone, via FMN and iron-sulfur (Fe-S) centers, to quinones in the photosynthetic chain and possibly in a chloroplast respiratory chain. The immediate electron acceptor for the enzyme in this species is believed to be plastoquinone. Couples the redox reaction to proton translocation, and thus conserves the redox energy in a proton gradient. The protein is NAD(P)H-quinone oxidoreductase subunit 2 A, chloroplastic of Phaseolus vulgaris (Kidney bean).